We begin with the raw amino-acid sequence, 215 residues long: uncharacterized protein (215 aa).

Belongs to the HAD-like hydrolase superfamily. CbbY/CbbZ/Gph/YieH family.

This is an uncharacterized protein from Lacticaseibacillus casei (Lactobacillus casei).